Reading from the N-terminus, the 486-residue chain is MDTKTTEIKGKERYKAGVLKYAQMGYWDGDYVPKDTDVLALFRITPQEGVDPVEAAAAVAGESSTATWTVVWTDRLTACDSYRAKAYRVEPVPGTPGQYFCYVAYDLILFEEGSIANLTASIIGNVFSFKPLKAARLEDMRFPVAYVKTYKGPPTGIVGERERLDKFGKPLLGATTKPKLGLSGKNYGRVVYEGLKGGLDFMKDDENINSQPFMHWRDRFLYVMEAVNLASAQTGEVKGHYLNITAGTMEEMYRRAEFAKSLGSVIVMVDLIIGYTAIQSISEWCRQNDMILHMHRAGHGTYTRQKNHGISFRVIAKWLRLAGVDHLHCGTAVGKLEGDPLTVQGYYNVCREPFNTVDLPRGIFFEQDWADLRKVMPVASGGIHAGQMHQLLSLFGDDVVLQFGGGTIGHPMGIQAGATANRVALEAMVLARNEGRNIDVEGPEILRAAAKWCKPLEAALDTWGNITFNYTSTDTSDFVPTASVAM.

Substrate contacts are provided by Asn125 and Thr175. Lys177 functions as the Proton acceptor in the catalytic mechanism. Lys179 contacts substrate. Lys203, Asp205, and Glu206 together coordinate Mg(2+). Lys203 carries the post-translational modification N6-carboxylysine. The Proton acceptor role is filled by His295. The substrate site is built by Arg296, His328, and Ser380.

Belongs to the RuBisCO large chain family. Type I subfamily. In terms of assembly, heterohexadecamer of 8 large chains and 8 small chains. Mg(2+) serves as cofactor.

The catalysed reaction is 2 (2R)-3-phosphoglycerate + 2 H(+) = D-ribulose 1,5-bisphosphate + CO2 + H2O. The enzyme catalyses D-ribulose 1,5-bisphosphate + O2 = 2-phosphoglycolate + (2R)-3-phosphoglycerate + 2 H(+). Functionally, ruBisCO catalyzes two reactions: the carboxylation of D-ribulose 1,5-bisphosphate, the primary event in carbon dioxide fixation, as well as the oxidative fragmentation of the pentose substrate. Both reactions occur simultaneously and in competition at the same active site. This Cereibacter sphaeroides (Rhodobacter sphaeroides) protein is Ribulose bisphosphate carboxylase large chain.